The primary structure comprises 151 residues: Ribosome maturation factor RimP (151 aa).

Belongs to the RimP family.

Its subcellular location is the cytoplasm. In terms of biological role, required for maturation of 30S ribosomal subunits. The chain is Ribosome maturation factor RimP from Caldicellulosiruptor saccharolyticus (strain ATCC 43494 / DSM 8903 / Tp8T 6331).